The following is a 418-amino-acid chain: Dual-specificity RNA methyltransferase RlmN (418 aa).

The interval 1-21 (MADTSLMPIPGQVDPVPAPRD) is disordered. Glutamate 122 functions as the Proton acceptor in the catalytic mechanism. The Radical SAM core domain occupies 128–383 (DADRGTLCVS…APVRTPRGRD (256 aa)). The cysteines at positions 135 and 388 are disulfide-linked. Positions 142, 146, and 149 each coordinate [4Fe-4S] cluster. Residues 212–213 (GE), serine 244, 266–268 (SLH), and asparagine 345 each bind S-adenosyl-L-methionine. The active-site S-methylcysteine intermediate is cysteine 388. Residues 393 to 418 (TAAQKKSRAERDREAAAEAEAAASQA) are disordered. Over residues 399–408 (SRAERDREAA) the composition is skewed to basic and acidic residues.

It belongs to the radical SAM superfamily. RlmN family. [4Fe-4S] cluster serves as cofactor.

The protein resides in the cytoplasm. The catalysed reaction is adenosine(2503) in 23S rRNA + 2 reduced [2Fe-2S]-[ferredoxin] + 2 S-adenosyl-L-methionine = 2-methyladenosine(2503) in 23S rRNA + 5'-deoxyadenosine + L-methionine + 2 oxidized [2Fe-2S]-[ferredoxin] + S-adenosyl-L-homocysteine. It carries out the reaction adenosine(37) in tRNA + 2 reduced [2Fe-2S]-[ferredoxin] + 2 S-adenosyl-L-methionine = 2-methyladenosine(37) in tRNA + 5'-deoxyadenosine + L-methionine + 2 oxidized [2Fe-2S]-[ferredoxin] + S-adenosyl-L-homocysteine. Specifically methylates position 2 of adenine 2503 in 23S rRNA and position 2 of adenine 37 in tRNAs. m2A2503 modification seems to play a crucial role in the proofreading step occurring at the peptidyl transferase center and thus would serve to optimize ribosomal fidelity. This Erythrobacter litoralis (strain HTCC2594) protein is Dual-specificity RNA methyltransferase RlmN.